The sequence spans 599 residues: Proline--tRNA ligase (599 aa).

The protein belongs to the class-II aminoacyl-tRNA synthetase family. ProS type 1 subfamily. As to quaternary structure, homodimer.

It localises to the cytoplasm. It catalyses the reaction tRNA(Pro) + L-proline + ATP = L-prolyl-tRNA(Pro) + AMP + diphosphate. In terms of biological role, catalyzes the attachment of proline to tRNA(Pro) in a two-step reaction: proline is first activated by ATP to form Pro-AMP and then transferred to the acceptor end of tRNA(Pro). As ProRS can inadvertently accommodate and process non-cognate amino acids such as alanine and cysteine, to avoid such errors it has two additional distinct editing activities against alanine. One activity is designated as 'pretransfer' editing and involves the tRNA(Pro)-independent hydrolysis of activated Ala-AMP. The other activity is designated 'posttransfer' editing and involves deacylation of mischarged Ala-tRNA(Pro). The misacylated Cys-tRNA(Pro) is not edited by ProRS. The chain is Proline--tRNA ligase from Prochlorococcus marinus (strain MIT 9303).